The primary structure comprises 553 residues: Sulfatase (553 aa).

Positions 1–25 are cleaved as a signal peptide; that stretch reads MTSEMKKFSKIVLFGLLISPLLASS. Ca(2+)-binding residues include D43, D44, and C88. The active-site Nucleophile is the C88. The residue at position 88 (C88) is a 3-oxoalanine (Cys). H159 is an active-site residue. Ca(2+) contacts are provided by D350 and N351.

Belongs to the sulfatase family. The cofactor is Ca(2+). The conversion to 3-oxoalanine (also known as C-formylglycine, FGly), of a serine or cysteine residue in prokaryotes and of a cysteine residue in eukaryotes, is critical for catalytic activity. This post-translational modification is severely defective in multiple sulfatase deficiency (MSD).

The protein localises to the secreted. Its function is as follows. Sulfatase that may be involved in ulvan degradation. Ulvan is the main polysaccharide component of the Ulvales (green seaweed) cell wall. It is composed of disaccharide building blocks comprising 3-sulfated rhamnose (Rha3S) linked to D-glucuronic acid (GlcA), L-iduronic acid (IduA), or D-xylose (Xyl). In Formosa agariphila (strain DSM 15362 / KCTC 12365 / LMG 23005 / KMM 3901 / M-2Alg 35-1), this protein is Sulfatase.